A 377-amino-acid chain; its full sequence is D-alanine--D-alanine ligase (377 aa).

The region spanning 141–347 is the ATP-grasp domain; it reads KRILNQAGIR…YSELIDRLIQ (207 aa). 171-226 lines the ATP pocket; it reads KEELGDLVFVKPAKQGSSVGIHKVDTEEEYETAMKDAFTYDYKVLVEAGIKNPREI. Mg(2+) contacts are provided by D301, E314, and N316.

This sequence belongs to the D-alanine--D-alanine ligase family. Requires Mg(2+) as cofactor. The cofactor is Mn(2+).

It is found in the cytoplasm. The enzyme catalyses 2 D-alanine + ATP = D-alanyl-D-alanine + ADP + phosphate + H(+). It functions in the pathway cell wall biogenesis; peptidoglycan biosynthesis. Its function is as follows. Cell wall formation. The sequence is that of D-alanine--D-alanine ligase from Limosilactobacillus fermentum (strain NBRC 3956 / LMG 18251) (Lactobacillus fermentum).